The primary structure comprises 376 residues: Putative type I restriction enzyme MpnIIP endonuclease subunit N-terminal part (376 aa).

The N-terminal section of a putative type I restriction enzyme that if reconstituted might recognize 5'-GAN(7)TAY-3' and cleave a random distance away. Subunit R is required for both nuclease and ATPase activities, but not for modification. This is Putative type I restriction enzyme MpnIIP endonuclease subunit N-terminal part from Mycoplasma pneumoniae (strain ATCC 29342 / M129 / Subtype 1) (Mycoplasmoides pneumoniae).